Consider the following 842-residue polypeptide: Molybdenum cofactor sulfurase (842 aa).

At K236 the chain carries N6-(pyridoxal phosphate)lysine. Residue C402 is part of the active site. The tract at residues 637-680 (PGSQHGDAQRSSKARLQKHQITTDQESDVQEVHPGSGTTTDSTW) is disordered. One can recognise an MOSC domain in the interval 663–831 (SDVQEVHPGS…AARGDVAYPT (169 aa)).

This sequence belongs to the class-V pyridoxal-phosphate-dependent aminotransferase family. MOCOS subfamily. Pyridoxal 5'-phosphate is required as a cofactor.

The enzyme catalyses Mo-molybdopterin + L-cysteine + AH2 = thio-Mo-molybdopterin + L-alanine + A + H2O. It participates in cofactor biosynthesis; molybdopterin biosynthesis. Functionally, sulfurates the molybdenum cofactor. Sulfation of molybdenum is essential for xanthine dehydrogenase (XDH) and aldehyde oxidase (ADO) enzymes in which molybdenum cofactor is liganded by 1 oxygen and 1 sulfur atom in active form. This is Molybdenum cofactor sulfurase from Pyricularia oryzae (strain 70-15 / ATCC MYA-4617 / FGSC 8958) (Rice blast fungus).